Reading from the N-terminus, the 396-residue chain is MDEEPERTKRWEGGYERTWEILKEDESGSLKATIEDILFKAKRKRVFEHHGQVRLGMMRHLYVVVDGSRTMEDQDLKPNRLTCTLKLLEYFVEEYFDQNPISQIGIIVTKSKRAEKLTELSGNPRKHITSLKKAVDMTCHGEPSLYNSLSMAMQTLKHMPGHTSREVLIIFSSLTTCDPSNIYDLIKTLKTAKIRVSVIGLSAEVRVCTVLARETGGTYHVILDETHYKELLARHVSPPPASSGSECSLIRMGFPQHTIASLSDQDAKPSFSMAHLDNNSTEPGLTLGGYFCPQCRAKYCELPVECKICGLTLVSAPHLARSYHHLFPLDAFQEIPLEEYKGERFCYGCQGELKDQHVYVCTVCRNVFCVDCDVFVHDSLHCCPGCVHKIPTQSGV.

Residues 60-236 enclose the VWFA domain; it reads HLYVVVDGSR…HYKELLARHV (177 aa). A Phosphotyrosine modification is found at Tyr95. A C4-type zinc finger spans residues 292 to 309; that stretch reads CPQCRAKYCELPVECKIC.

This sequence belongs to the GTF2H2 family. As to quaternary structure, component of the TFIID-containing RNA polymerase II pre-initiation complex that is composed of TBP and at least GTF2A1, GTF2A2, GTF2E1, GTF2E2, GTF2F1, GTF2H2, GTF2H3, GTF2H4, GTF2H5, GTF2B, TCEA1, ERCC2 and ERCC3. Component of the 7-subunit TFIIH core complex composed of XPB/ERCC3, XPD/ERCC2, GTF2H1, GTF2H2, GTF2H3, GTF2H4 and GTF2H5, which is active in NER. The core complex associates with the 3-subunit CDK-activating kinase (CAK) module composed of CCNH/cyclin H, CDK7 and MNAT1 to form the 10-subunit holoenzyme (holo-TFIIH) active in transcription. Interacts with XPB, XPD, GTF2H1 and GTF2H3.

The protein localises to the nucleus. Functionally, component of the general transcription and DNA repair factor IIH (TFIIH) core complex, which is involved in general and transcription-coupled nucleotide excision repair (NER) of damaged DNA and, when complexed to CAK, in RNA transcription by RNA polymerase II. In NER, TFIIH acts by opening DNA around the lesion to allow the excision of the damaged oligonucleotide and its replacement by a new DNA fragment. In transcription, TFIIH has an essential role in transcription initiation. When the pre-initiation complex (PIC) has been established, TFIIH is required for promoter opening and promoter escape. Phosphorylation of the C-terminal tail (CTD) of the largest subunit of RNA polymerase II by the kinase module CAK controls the initiation of transcription. The N-terminus of GTF2H2 interacts with and regulates XPD whereas an intact C-terminus is required for a successful escape of RNAP II form the promoter. The sequence is that of General transcription factor IIH subunit 2 (Gtf2h2) from Rattus norvegicus (Rat).